A 238-amino-acid polypeptide reads, in one-letter code: Calmodulin-binding protein 25 (238 aa).

Positions 68 to 78 (STNTLSSTVSG) are enriched in polar residues. A disordered region spans residues 68–87 (STNTLSSTVSGASDPEIIGG). The Bipartite nuclear localization signal motif lies at 92–108 (KRNCLLTDGKAAKRRAR). The VQ signature appears at 125 to 134 (FRQMVQQVTG). Residues 201 to 220 (SSVGLPSGKPSATADPGGSA) form a disordered region.

In terms of assembly, interacts with calmodulin (CaM). Interacts with WRKY25 and WRKY51. Expressed in leaves, flowers and siliques.

The protein resides in the nucleus. Functionally, calmodulin-binding protein that functions as a negative regulator of osmotic stress tolerance. This is Calmodulin-binding protein 25 from Arabidopsis thaliana (Mouse-ear cress).